The primary structure comprises 1248 residues: Period circadian protein homolog 2 (1248 aa).

The disordered stretch occupies residues 1–57 (MNGYVEFSPSPTKESVEPQPSQAVLQEDVDMSSGSSGHENCSMGRDSQGSDCDDNGK). Composition is skewed to polar residues over residues 9–24 (PSPTKESVEPQPSQAV) and 32–50 (SSGSSGHENCSMGRDSQGS). Positions 105 to 114 (LIRTLRELKV) match the Nuclear export signal 1 motif. One can recognise a PAS 1 domain in the interval 175–242 (ITSEYIVKNA…FHSYTTPYKL (68 aa)). The LXXLL signature appears at 302–306 (LCCLL). The region spanning 315–381 (YEAPRIPPEK…MLAIHKKILQ (67 aa)) is the PAS 2 domain. Positions 389 to 432 (YSPIRFRARNGEYITLDTSWSSFINPWSRKISFIIGRHKVRVGP) constitute a PAC domain. Positions 456 to 465 (LTEQIHRLLM) match the Nuclear export signal 2 motif. 2 disordered regions span residues 467 to 563 (PVPH…SLPK) and 619 to 638 (VSPGLHAEEAAPPPSKVSSH). The important for protein stability stretch occupies residues 474-478 (SGYGS). A CSNK1E binding domain region spans residues 506–706 (RKSGISKNGS…GAPGGLSQEK (201 aa)). The segment covering 510–521 (ISKNGSKTQTRS) has biased composition (polar residues). Phosphoserine occurs at positions 521, 524, 527, and 540. The segment covering 523–534 (FSHESGEQKEIA) has biased composition (basic and acidic residues). Phosphoserine occurs at positions 656, 690, 694, 703, and 755. Disordered regions lie at residues 675-708 (DKKPQPELETVEDAVSGPESLDGAPGGLSQEKGP) and 751-829 (RAQA…PSAP). A Nuclear localization signal motif is present at residues 773 to 789 (KKTGKNRKLKSKRVKTR). The segment covering 774–787 (KTGKNRKLKSKRVK) has biased composition (basic residues). Low complexity predominate over residues 816-827 (SPSDTSQSSCPS). The segment at 873–1058 (DFAVQPLPLA…DLCSATGSAL (186 aa)) is interaction with PPARG. S930 is modified (phosphoserine). The interval 950-971 (TPPAATVTSGRASPPLFQSRGS) is disordered. A Phosphothreonine modification is found at T955. S962 carries the phosphoserine modification. Residues 974-981 (LQLNLLQL) carry the Nuclear export signal 3 motif. The interval 984–1035 (APEGSTGAAGTSGTTGTAAAGLDCTPGTSRDRQPKAPSTCKEPSDTQNSDAL) is disordered. Residues 987–1004 (GSTGAAGTSGTTGTAAAG) show a composition bias toward low complexity. Positions 1042–1046 (LNLLL) match the LXXLL motif. Low complexity predominate over residues 1057-1080 (ALSGSGASATSDSLGSGSLGCDAS). Residues 1057-1113 (ALSGSGASATSDSLGSGSLGCDASRSGAGSSDTSHTSKYFGSIDSSENNHKAKVSTD) are disordered. The segment covering 1083-1102 (GAGSSDTSHTSKYFGSIDSS) has biased composition (polar residues). The span at 1103 to 1112 (ENNHKAKVST) shows a compositional bias: basic and acidic residues. Residue S1117 is modified to Phosphoserine. Residues 1148-1248 (SRDLESVLRE…LTGPRIEAQT (101 aa)) are CRY binding domain. The segment at 1215-1248 (PYEEDSPSPGLCDTSEAKEEEGEQLTGPRIEAQT) is disordered.

As to quaternary structure, homodimer. Component of the circadian core oscillator, which includes the CRY proteins, CLOCK or NPAS2, BMAL1 or BMAL2, CSNK1D and/or CSNK1E, TIMELESS, and the PER proteins. Interacts with CLOCK-BMAL1 (off DNA). Interacts with BMAL2. Interacts directly with PER1 and PER3, and through a C-terminal domain, with CRY1 and CRY2. Interacts (via PAS 2 domain) with TIMELESS. Interacts with NFIL3. Different large complexes have been identified with different repressive functions. The core of PER complexes is composed of at least PER1, PER2, PER3, CRY1, CRY2, CSNK1D and/or CSNK1E. The large PER complex involved in the repression of transcriptional termination is composed of at least PER2, CDK9, DDX5, DHX9, NCBP1 and POLR2A (active). The large PER complex involved in the histone deacetylation is composed of at least HDAC1, PER2, SFPQ and SIN3A. The large PER complex involved in the histone methylation is composed of at least PER2, CBX3, TRIM28, SUV39H1 and/or SUV39H2; CBX3 mediates the formation of the complex. Interacts with SETX; the interaction inhibits termination of circadian target genes. Interacts with the nuclear receptors HNF4A, NR1D1, NR4A2, RORA, PPARA, PPARG and THRA; the interaction with at least PPARG is ligand dependent. Interacts with PML. Interacts (phosphorylated) with BTRC and FBXW11; the interactions trigger proteasomal degradation. Interacts with NONO and SFPQ. Interacts with PRKCDBP. Interacts with MAGEL2. Interacts with MAP1LC3B. Interacts with HNF4A. In terms of processing, acetylated. Deacetylated by SIRT1, resulting in decreased protein stability. Deacetylated by SIRT6, preventing its degradation by the proteasome, resulting in increased protein stability. Phosphorylated by CSNK1E and CSNK1D. Phosphorylation results in PER2 protein degradation. May be dephosphorylated by PP1. Post-translationally, ubiquitinated, leading to its proteasomal degradation. Ubiquitination may be inhibited by CRY1. In terms of tissue distribution, expressed in the brain, mainly in the suprachiasmatic nucleus (SCN). Expression also found in the harderian gland, lung, eye, intestine, liver and skeletal muscle.

It is found in the nucleus. It localises to the cytoplasm. Its subcellular location is the perinuclear region. Functionally, transcriptional repressor which forms a core component of the circadian clock. The circadian clock, an internal time-keeping system, regulates various physiological processes through the generation of approximately 24 hour circadian rhythms in gene expression, which are translated into rhythms in metabolism and behavior. It is derived from the Latin roots 'circa' (about) and 'diem' (day) and acts as an important regulator of a wide array of physiological functions including metabolism, sleep, body temperature, blood pressure, endocrine, immune, cardiovascular, and renal function. Consists of two major components: the central clock, residing in the suprachiasmatic nucleus (SCN) of the brain, and the peripheral clocks that are present in nearly every tissue and organ system. Both the central and peripheral clocks can be reset by environmental cues, also known as Zeitgebers (German for 'timegivers'). The predominant Zeitgeber for the central clock is light, which is sensed by retina and signals directly to the SCN. The central clock entrains the peripheral clocks through neuronal and hormonal signals, body temperature and feeding-related cues, aligning all clocks with the external light/dark cycle. Circadian rhythms allow an organism to achieve temporal homeostasis with its environment at the molecular level by regulating gene expression to create a peak of protein expression once every 24 hours to control when a particular physiological process is most active with respect to the solar day. Transcription and translation of core clock components (CLOCK, NPAS2, BMAL1, BMAL2, PER1, PER2, PER3, CRY1 and CRY2) plays a critical role in rhythm generation, whereas delays imposed by post-translational modifications (PTMs) are important for determining the period (tau) of the rhythms (tau refers to the period of a rhythm and is the length, in time, of one complete cycle). A diurnal rhythm is synchronized with the day/night cycle, while the ultradian and infradian rhythms have a period shorter and longer than 24 hours, respectively. Disruptions in the circadian rhythms contribute to the pathology of cardiovascular diseases, cancer, metabolic syndrome and aging. A transcription/translation feedback loop (TTFL) forms the core of the molecular circadian clock mechanism. Transcription factors, CLOCK or NPAS2 and BMAL1 or BMAL2, form the positive limb of the feedback loop, act in the form of a heterodimer and activate the transcription of core clock genes and clock-controlled genes (involved in key metabolic processes), harboring E-box elements (5'-CACGTG-3') within their promoters. The core clock genes: PER1/2/3 and CRY1/2 which are transcriptional repressors form the negative limb of the feedback loop and interact with the CLOCK|NPAS2-BMAL1|BMAL2 heterodimer inhibiting its activity and thereby negatively regulating their own expression. This heterodimer also activates nuclear receptors NR1D1/2 and RORA/B/G, which form a second feedback loop and which activate and repress BMAL1 transcription, respectively. PER1 and PER2 proteins transport CRY1 and CRY2 into the nucleus with appropriate circadian timing, but also contribute directly to repression of clock-controlled target genes through interaction with several classes of RNA-binding proteins, helicases and others transcriptional repressors. PER appears to regulate circadian control of transcription by at least three different modes. First, interacts directly with the CLOCK-BMAL1 at the tail end of the nascent transcript peak to recruit complexes containing the SIN3-HDAC that remodel chromatin to repress transcription. Second, brings H3K9 methyltransferases such as SUV39H1 and SUV39H2 to the E-box elements of the circadian target genes, like PER2 itself or PER1. The recruitment of each repressive modifier to the DNA seems to be very precisely temporally orchestrated by the large PER complex, the deacetylases acting before than the methyltransferases. Additionally, large PER complexes are also recruited to the target genes 3' termination site through interactions with RNA-binding proteins and helicases that may play a role in transcription termination to regulate transcription independently of CLOCK-BMAL1 interactions. Recruitment of large PER complexes to the elongating polymerase at PER and CRY termination sites inhibited SETX action, impeding RNA polymerase II release and thereby repressing transcriptional reinitiation. May propagate clock information to metabolic pathways via the interaction with nuclear receptors. Coactivator of PPARA and corepressor of NR1D1, binds rhythmically at the promoter of nuclear receptors target genes like BMAL1 or G6PC1. Directly and specifically represses PPARG proadipogenic activity by blocking PPARG recruitment to target promoters and thereby transcriptional activation. Required for fatty acid and lipid metabolism, is involved as well in the regulation of circulating insulin levels. Plays an important role in the maintenance of cardiovascular functions through the regulation of NO and vasodilatatory prostaglandins production in aortas. Controls circadian glutamate uptake in synaptic vesicles through the regulation of VGLUT1 expression. May also be involved in the regulation of inflammatory processes. Represses the CLOCK-BMAL1 induced transcription of BHLHE40/DEC1 and ATF4. Negatively regulates the formation of the TIMELESS-CRY1 complex by competing with TIMELESS for binding to CRY1. In Spalax judaei (Judean Mountains blind mole rat), this protein is Period circadian protein homolog 2 (PER2).